The sequence spans 195 residues: GTP-dependent dephospho-CoA kinase (195 aa).

GTP-binding residues include Asp49, Val50, Asp68, Glu127, and Asp150.

This sequence belongs to the GTP-dependent DPCK family.

It carries out the reaction 3'-dephospho-CoA + GTP = GDP + CoA + H(+). It participates in cofactor biosynthesis; coenzyme A biosynthesis. Its function is as follows. Catalyzes the GTP-dependent phosphorylation of the 3'-hydroxyl group of dephosphocoenzyme A to form coenzyme A (CoA). This chain is GTP-dependent dephospho-CoA kinase, found in Methanosarcina acetivorans (strain ATCC 35395 / DSM 2834 / JCM 12185 / C2A).